The chain runs to 514 residues: Pantothenate transporter liz1 (514 aa).

Transmembrane regions (helical) follow at residues 24–44 (LLIK…FINY), 72–92 (INVV…YALQ), 98–118 (LWFS…FAVH), 128–148 (FFMA…LGAW), 159–179 (GIFS…QTAV), 194–214 (WLFI…LFLF), 263–283 (GLCI…NVLM), 300–320 (NYPT…SVIS), 329–349 (WPFG…LLAW), 357–377 (FFAY…FSWA), 390–410 (VVVF…APIM), and 423–443 (LIGL…VSYM).

Belongs to the major facilitator superfamily. Allantoate permease family.

The protein resides in the cell membrane. Its function is as follows. Transports pantothenate into the cell. This chain is Pantothenate transporter liz1 (liz1), found in Schizosaccharomyces pombe (strain 972 / ATCC 24843) (Fission yeast).